The sequence spans 212 residues: External core antigen (212 aa).

Residues 1 to 19 form the signal peptide; that stretch reads MQLFHLCLIIFCSCPTVQA. Positions 25 to 27 are HBEAG; sequence GWL. The tract at residues 165–212 is disordered; sequence NAPILSTLPETTVVRRRGRSPRRRTPSPRRRRSQSPRRRRSQSPASQC. Positions 178 to 205 are enriched in basic residues; that stretch reads VRRRGRSPRRRTPSPRRRRSQSPRRRRS. 3 consecutive repeat copies span residues 184 to 190, 191 to 198, and 199 to 206. The 3 X 8 AA repeats of S-P-R-R-R-R-S-Q stretch occupies residues 184–206; that stretch reads SPRRRTPSPRRRRSQSPRRRRSQ. Positions 184–212 are excised as a propeptide; it reads SPRRRTPSPRRRRSQSPRRRRSQSPASQC.

The protein belongs to the orthohepadnavirus precore antigen family. Homodimerizes. Post-translationally, phosphorylated. Cleaved by host furin.

It localises to the secreted. It is found in the host nucleus. In terms of biological role, may regulate immune response to the intracellular capsid in acting as a T-cell tolerogen, by having an immunoregulatory effect which prevents destruction of infected cells by cytotoxic T-cells. This immune regulation may predispose to chronicity during perinatal infections and prevent severe liver injury during adult infections. In Hepatitis B virus genotype F2 (isolate Brazil/w4B) (HBV-F), this protein is External core antigen.